A 336-amino-acid chain; its full sequence is Dihydroorotate dehydrogenase (quinone) (336 aa).

Residues 62-66 (AGLDK) and Thr-86 contribute to the FMN site. Lys-66 contributes to the substrate binding site. Position 111–115 (111–115 (NRMGF)) interacts with substrate. The FMN site is built by Asn-139 and Asn-172. Residue Asn-172 coordinates substrate. The active-site Nucleophile is the Ser-175. Asn-177 serves as a coordination point for substrate. 2 residues coordinate FMN: Lys-217 and Thr-245. 246–247 (NT) contacts substrate. FMN-binding positions include Gly-268, Gly-297, and 318 to 319 (YS).

Belongs to the dihydroorotate dehydrogenase family. Type 2 subfamily. In terms of assembly, monomer. FMN is required as a cofactor.

Its subcellular location is the cell membrane. It carries out the reaction (S)-dihydroorotate + a quinone = orotate + a quinol. Its pathway is pyrimidine metabolism; UMP biosynthesis via de novo pathway; orotate from (S)-dihydroorotate (quinone route): step 1/1. Catalyzes the conversion of dihydroorotate to orotate with quinone as electron acceptor. The sequence is that of Dihydroorotate dehydrogenase (quinone) from Klebsiella pneumoniae subsp. pneumoniae (strain ATCC 700721 / MGH 78578).